Here is a 260-residue protein sequence, read N- to C-terminus: Ribose-5-phosphate isomerase (260 aa).

The protein belongs to the ribose 5-phosphate isomerase family.

The protein resides in the cytoplasm. It catalyses the reaction aldehydo-D-ribose 5-phosphate = D-ribulose 5-phosphate. It functions in the pathway carbohydrate degradation; pentose phosphate pathway; D-ribose 5-phosphate from D-ribulose 5-phosphate (non-oxidative stage): step 1/1. The chain is Ribose-5-phosphate isomerase (RKI1) from Candida glabrata (strain ATCC 2001 / BCRC 20586 / JCM 3761 / NBRC 0622 / NRRL Y-65 / CBS 138) (Yeast).